The sequence spans 101 residues: Interleukin-8 (101 aa).

Positions 1-22 (MTSKLAVALLAAFVLSAALCEA) are cleaved as a signal peptide. Residue Arg-27 is modified to Citrulline. Disulfide bonds link Cys-34-Cys-61 and Cys-36-Cys-77.

This sequence belongs to the intercrine alpha (chemokine CxC) family. As to quaternary structure, homodimer. Interacts with TNFAIP6 (via Link domain); this interaction interferes with chemokine binding to glycosaminoglycans. Post-translationally, citrullination at Arg-27 prevents proteolysis, and dampens tissue inflammation, it also enhances leukocytosis, possibly through impaired chemokine clearance from the blood circulation.

It localises to the secreted. Its function is as follows. Chemotactic factor that mediates inflammatory response by attracting neutrophils, basophils, and T-cells to clear pathogens and protect the host from infection. Also plays an important role in neutrophil activation. Released in response to an inflammatory stimulus, exerts its effect by binding to the G-protein-coupled receptors CXCR1 and CXCR2, primarily found in neutrophils, monocytes and endothelial cells. G-protein heterotrimer (alpha, beta, gamma subunits) constitutively binds to CXCR1/CXCR2 receptor and activation by IL8 leads to beta and gamma subunits release from Galpha (GNAI2 in neutrophils) and activation of several downstream signaling pathways including PI3K and MAPK pathways. This Canis lupus familiaris (Dog) protein is Interleukin-8 (CXCL8).